We begin with the raw amino-acid sequence, 156 residues long: ATP synthase subunit b (156 aa).

The chain crosses the membrane as a helical span at residues 7–29 (LLGQAISFAMFVWFCMKYVWPPI).

This sequence belongs to the ATPase B chain family. In terms of assembly, F-type ATPases have 2 components, F(1) - the catalytic core - and F(0) - the membrane proton channel. F(1) has five subunits: alpha(3), beta(3), gamma(1), delta(1), epsilon(1). F(0) has three main subunits: a(1), b(2) and c(10-14). The alpha and beta chains form an alternating ring which encloses part of the gamma chain. F(1) is attached to F(0) by a central stalk formed by the gamma and epsilon chains, while a peripheral stalk is formed by the delta and b chains.

It is found in the cell inner membrane. Functionally, f(1)F(0) ATP synthase produces ATP from ADP in the presence of a proton or sodium gradient. F-type ATPases consist of two structural domains, F(1) containing the extramembraneous catalytic core and F(0) containing the membrane proton channel, linked together by a central stalk and a peripheral stalk. During catalysis, ATP synthesis in the catalytic domain of F(1) is coupled via a rotary mechanism of the central stalk subunits to proton translocation. Component of the F(0) channel, it forms part of the peripheral stalk, linking F(1) to F(0). This Vibrio vulnificus (strain CMCP6) protein is ATP synthase subunit b.